The chain runs to 317 residues: Mitochondrial thiamine pyrophosphate carrier 1 (317 aa).

Solcar repeat units lie at residues 12 to 110 (GTRR…TTQV), 120 to 206 (PPAL…LRPV), and 214 to 309 (PFGS…SLKL). Transmembrane regions (helical) follow at residues 17–35 (VVLS…VAPL), 91–107 (LMYV…YRTT), 126–146 (FVSG…LDLL), 181–198 (GCSA…LFFA), 220–240 (AAAG…LDLV), and 284–301 (GLTV…ITMW).

This sequence belongs to the mitochondrial carrier (TC 2.A.29) family.

It is found in the mitochondrion inner membrane. Mitochondrial transporter that mediates uptake of thiamine pyrophosphate (ThPP) into mitochondria. This Neosartorya fischeri (strain ATCC 1020 / DSM 3700 / CBS 544.65 / FGSC A1164 / JCM 1740 / NRRL 181 / WB 181) (Aspergillus fischerianus) protein is Mitochondrial thiamine pyrophosphate carrier 1 (tpc1).